A 398-amino-acid polypeptide reads, in one-letter code: Type III polyketide synthase pspB (398 aa).

Residues lysine 47 and 47–54 contribute to the CoA site; that span reads KLLQINRS. The active-site Nucleophile is the cysteine 152. 214–215 is a substrate binding site; it reads SD. CoA contacts are provided by residues leucine 267, glycine 321, 321-324, and alanine 324; that span reads GGEA.

It belongs to the thiolase-like superfamily. Chalcone/stilbene synthases family. In terms of assembly, homodimer.

The catalysed reaction is 11 malonyl-CoA + acetyl-CoA + S-adenosyl-L-methionine + 12 NADPH + 22 H(+) = soppiline B + S-adenosyl-L-homocysteine + 12 CO2 + 12 NADP(+) + 12 CoA + 8 H2O. It functions in the pathway secondary metabolite biosynthesis. Its function is as follows. Type III polyketide synthase; part of the gene cluster that mediates the biosynthesis of the alkylresorcinols called soppilines. The biosynthesis starts with the HR-PKS pspA-catalyzed carbon chain assembly through nine chain elongation cycles, using acetyl CoA and malonyl CoA as a starter and extender units, respectively, to produce the polyketide soppiline A. In the first round, the KR, DH, and CMeT domains work to produce 2-methyl-2-butenyl thioester. In rounds 2 to 5, the KR, DH, and ER domains fully catalyze the reduction of the elongated beta-ketothioester, resulting in the insertion of eight methylene units. The unusual Z,E,Z-triene motif is likely constructed during rounds 6 to 8. Typically, the DH domain introduces a double bond at an alpha,beta-position of an elongated polyketide chain, with the dehydration of a beta-hydroxy group. The last extension cycle would be carried out with L-oriented beta-ketoreduction by the KR domain to produce beta-hydroxy carboxylic acid soppiline A. The type III PKS pspB intercepts the elongated polyketide chain at round 8 from the HR-PKS pspA, followed by a tri-keto extension and decarboxylative aldol cyclization to produce 1,3,5-trisubstituted alkylresorcinol soppiline B. Subsequently, the cytochrome P450 monooxygenase pspC catalyzes three-step oxidations at the C-4 methyl group to carboxylic acid to yield soppiline C. This chain is Type III polyketide synthase pspB, found in Penicillium soppii.